Here is a 303-residue protein sequence, read N- to C-terminus: Zinc transporter ZIP9-A (303 aa).

The helical transmembrane segment at 7 to 27 (ISLLSLAMLVGCYVSGIIPLA) threads the bilayer. N-linked (GlcNAc...) asparagine glycosylation is present at N29. 5 consecutive transmembrane segments (helical) span residues 35–55 (LKLV…AVII), 102–122 (AYIG…DQIG), 142–162 (ITTT…LGAA), 172–192 (LIVF…LVSF), and 206–226 (HLLV…LGLS). N-linked (GlcNAc...) asparagine glycosylation is present at N237. 2 helical membrane-spanning segments follow: residues 240–260 (GVAM…HVLP) and 282–302 (LEVC…IGHQ).

The protein belongs to the ZIP transporter (TC 2.A.5) family.

It localises to the golgi apparatus. The protein localises to the trans-Golgi network membrane. It is found in the cell membrane. The protein resides in the cytoplasm. Its subcellular location is the perinuclear region. It localises to the mitochondrion. The protein localises to the nucleus. The catalysed reaction is Zn(2+)(in) = Zn(2+)(out). Transports zinc ions across cell and organelle membranes into the cytoplasm and regulates intracellular zinc homeostasis. Participates in the zinc ions efflux out of the secretory compartments. Regulates intracellular zinc level, resulting in the enhancement of AKT1 and MAPK3/MAPK1 (Erk1/2) phosphorylation in response to the BCR activation. Also functions as a membrane androgen receptor that mediates, through a G protein, the non-classical androgen signaling pathway, characterized by the activation of MAPK3/MAPK1 (Erk1/2) and transcription factors CREB1 or ATF1. Moreover, has dual functions as a membrane-bound androgen receptor and as an androgen-dependent zinc transporter both of which are mediated through an inhibitory G protein (Gi) that mediates both MAP kinase and zinc signaling leading to the androgen-dependent apoptotic process. This chain is Zinc transporter ZIP9-A (slc39a9-a), found in Xenopus laevis (African clawed frog).